The following is a 265-amino-acid chain: Sulfur carrier protein FdhD (265 aa).

Catalysis depends on C107, which acts as the Cysteine persulfide intermediate.

Belongs to the FdhD family.

The protein resides in the cytoplasm. Its function is as follows. Required for formate dehydrogenase (FDH) activity. Acts as a sulfur carrier protein that transfers sulfur from IscS to the molybdenum cofactor prior to its insertion into FDH. The protein is Sulfur carrier protein FdhD of Staphylococcus aureus (strain MRSA252).